The sequence spans 433 residues: Tol-Pal system protein TolB (433 aa).

A signal peptide spans 1-21 (MRNLLRGMLVVICCMAGIVMA).

It belongs to the TolB family. In terms of assembly, the Tol-Pal system is composed of five core proteins: the inner membrane proteins TolA, TolQ and TolR, the periplasmic protein TolB and the outer membrane protein Pal. They form a network linking the inner and outer membranes and the peptidoglycan layer.

It is found in the periplasm. In terms of biological role, part of the Tol-Pal system, which plays a role in outer membrane invagination during cell division and is important for maintaining outer membrane integrity. This chain is Tol-Pal system protein TolB, found in Pseudomonas fluorescens (strain Pf0-1).